The sequence spans 335 residues: Fructose-1,6-bisphosphatase class 1 (335 aa).

4 residues coordinate Mg(2+): Glu-90, Asp-113, Leu-115, and Asp-116. Residues Asp-116 to Ser-119, Asn-209, Tyr-242, and Lys-272 each bind substrate. Mg(2+) is bound at residue Glu-278.

Belongs to the FBPase class 1 family. Homotetramer. Requires Mg(2+) as cofactor.

The protein localises to the cytoplasm. The enzyme catalyses beta-D-fructose 1,6-bisphosphate + H2O = beta-D-fructose 6-phosphate + phosphate. It participates in carbohydrate biosynthesis; gluconeogenesis. The protein is Fructose-1,6-bisphosphatase class 1 of Histophilus somni (strain 2336) (Haemophilus somnus).